The sequence spans 483 residues: V-type proton ATPase subunit H (483 aa).

S483 bears the Phosphoserine mark.

It belongs to the V-ATPase H subunit family. As to quaternary structure, V-ATPase is a heteromultimeric enzyme made up of two complexes: the ATP-hydrolytic V1 complex and the proton translocation V0 complex. The V1 complex consists of three catalytic AB heterodimers that form a heterohexamer, three peripheral stalks each consisting of EG heterodimers, one central rotor including subunits D and F, and the regulatory subunits C and H. The proton translocation complex V0 consists of the proton transport subunit a, a ring of proteolipid subunits c9c'', rotary subunit d, subunits e and f, and the accessory subunits ATP6AP1/Ac45 and ATP6AP2/PRR. Interacts with AP2M1.

It is found in the cytoplasmic vesicle. It localises to the clathrin-coated vesicle membrane. In terms of biological role, subunit of the V1 complex of vacuolar(H+)-ATPase (V-ATPase), a multisubunit enzyme composed of a peripheral complex (V1) that hydrolyzes ATP and a membrane integral complex (V0) that translocates protons. V-ATPase is responsible for acidifying and maintaining the pH of intracellular compartments and in some cell types, is targeted to the plasma membrane, where it is responsible for acidifying the extracellular environment. Subunit H is essential for V-ATPase activity, but not for the assembly of the complex. Involved in the endocytosis mediated by clathrin-coated pits, required for the formation of endosomes. In Sus scrofa (Pig), this protein is V-type proton ATPase subunit H (ATP6V1H).